A 449-amino-acid polypeptide reads, in one-letter code: Methylenetetrahydrofolate--tRNA-(uracil-5-)-methyltransferase TrmFO (449 aa).

10–15 (GGGLAG) contacts FAD.

It belongs to the MnmG family. TrmFO subfamily. Requires FAD as cofactor.

It is found in the cytoplasm. The catalysed reaction is uridine(54) in tRNA + (6R)-5,10-methylene-5,6,7,8-tetrahydrofolate + NADH + H(+) = 5-methyluridine(54) in tRNA + (6S)-5,6,7,8-tetrahydrofolate + NAD(+). The enzyme catalyses uridine(54) in tRNA + (6R)-5,10-methylene-5,6,7,8-tetrahydrofolate + NADPH + H(+) = 5-methyluridine(54) in tRNA + (6S)-5,6,7,8-tetrahydrofolate + NADP(+). Catalyzes the folate-dependent formation of 5-methyl-uridine at position 54 (M-5-U54) in all tRNAs. This Sphingopyxis alaskensis (strain DSM 13593 / LMG 18877 / RB2256) (Sphingomonas alaskensis) protein is Methylenetetrahydrofolate--tRNA-(uracil-5-)-methyltransferase TrmFO.